The primary structure comprises 255 residues: 5'-nucleotidase SurE (255 aa).

A divalent metal cation is bound by residues D16, D17, S47, and N100.

This sequence belongs to the SurE nucleotidase family. A divalent metal cation is required as a cofactor.

It localises to the cytoplasm. It carries out the reaction a ribonucleoside 5'-phosphate + H2O = a ribonucleoside + phosphate. Its function is as follows. Nucleotidase that shows phosphatase activity on nucleoside 5'-monophosphates. The polypeptide is 5'-nucleotidase SurE (Vibrio vulnificus (strain YJ016)).